We begin with the raw amino-acid sequence, 279 residues long: Undecaprenyl-diphosphatase (279 aa).

8 helical membrane-spanning segments follow: residues 17–37 (TEFLPVSSTGHLFLFSYFFPF), 46–66 (AFEDLFDIFIQTGAILSVVVL), 92–112 (FQFYLNLIVGILPILILGFLL), 123–143 (SDLLLILGMSWFVGGIIMVFV), 156–176 (IGFKESIIVGFLQCFALIPGV), 197–217 (AEFSFFLAIPVLTLAGIYKLY), 226–246 (ETIGLLLFGSIISFIICYFII), and 257–277 (SFISFGVYRILLGLLVILYFV).

This sequence belongs to the UppP family.

The protein localises to the cell inner membrane. It carries out the reaction di-trans,octa-cis-undecaprenyl diphosphate + H2O = di-trans,octa-cis-undecaprenyl phosphate + phosphate + H(+). Catalyzes the dephosphorylation of undecaprenyl diphosphate (UPP). Confers resistance to bacitracin. The chain is Undecaprenyl-diphosphatase from Leptospira biflexa serovar Patoc (strain Patoc 1 / ATCC 23582 / Paris).